A 243-amino-acid chain; its full sequence is MTVYNDIIEKLKRKKIHMTLIDPASQDIESSGRIAEAAERAGTDFIMIGGSTRINSELMDKTIGAIKSKTSLKTIIFPGSPEMISPRADAIYYMSLMNSRNIDFIIGHQVKTSLFLRQLAIETIPMAYLIFEPGMTVGRVGEANLIKRDDSDTALLYALAAETFGMKLVYLESGSGSPTYVSENVIKKIKEYVKIPVIVGGGIRDKNAAEKLAAAGADIIVTGTIVERSRNVYEALQEIISSI.

Mg(2+)-binding residues include aspartate 22 and serine 51. Sn-glycerol 1-phosphate contacts are provided by residues 170–176, 201–202, and 223–224; these read YLESGSG, GG, and GT.

This sequence belongs to the GGGP/HepGP synthase family. Group II subfamily. Mg(2+) serves as cofactor.

It is found in the cytoplasm. It carries out the reaction sn-glycerol 1-phosphate + (2E,6E,10E)-geranylgeranyl diphosphate = sn-3-O-(geranylgeranyl)glycerol 1-phosphate + diphosphate. Its pathway is membrane lipid metabolism; glycerophospholipid metabolism. Its function is as follows. Prenyltransferase that catalyzes the transfer of the geranylgeranyl moiety of geranylgeranyl diphosphate (GGPP) to the C3 hydroxyl of sn-glycerol-1-phosphate (G1P). This reaction is the first ether-bond-formation step in the biosynthesis of archaeal membrane lipids. This Picrophilus torridus (strain ATCC 700027 / DSM 9790 / JCM 10055 / NBRC 100828 / KAW 2/3) protein is Geranylgeranylglyceryl phosphate synthase.